The following is a 182-amino-acid chain: ADP-ribosylation factor-like protein 3 (182 aa).

Gly2 carries the N-myristoyl glycine lipid modification. Position 5 is a phosphoserine (Ser5). GTP-binding positions include 24–31, Thr48, 67–71, Gly70, 126–129, and 159–161; these read GLDNAGKT, DIGGQ, NKQD, and SAL. Mg(2+) contacts are provided by Thr31 and Thr48.

It belongs to the small GTPase superfamily. Arf family. As to quaternary structure, found in a complex with ARL3, RP2 and UNC119 (or UNC119B); RP2 induces hydrolysis of GTP ARL3 in the complex, leading to the release of UNC119 (or UNC119B). Interacts with RP2; interaction is direct and stimulated with the activated GTP-bound form of ARL3. Interacts with SYS1. Interacts with ARL2BP; the GTP-bound form interacts with ARL2BP. Microtubule-associated protein. Does not interact with TBCC. Interacts with RP2. Interacts with PDE6D; the interaction occurs specifically with the GTP-bound form of ARL3. Interacts with GGA1; the interaction recruits PKD1:PKD2 complex to trans-Golgi network and is required for ciliary targeting of PKD1:PKD2 complex. Interacts with DNAAF9.

The protein resides in the golgi apparatus membrane. It is found in the cytoplasm. Its subcellular location is the cytoskeleton. The protein localises to the spindle. It localises to the nucleus. The protein resides in the microtubule organizing center. It is found in the centrosome. Its subcellular location is the cell projection. The protein localises to the cilium. Small GTP-binding protein which cycles between an inactive GDP-bound and an active GTP-bound form, and the rate of cycling is regulated by guanine nucleotide exchange factors (GEF) and GTPase-activating proteins (GAP). Required for normal cytokinesis and cilia signaling. Required for targeting proteins to the cilium, including myristoylated NPHP3 and prenylated INPP5E. Targets NPHP3 to the ciliary membrane by releasing myristoylated NPHP3 from UNC119B cargo adapter into the cilium. Requires assistance from GTPase-activating proteins (GAPs) like RP2 and PDE6D, in order to cycle between inactive GDP-bound and active GTP-bound forms. Required for PKD1:PKD2 complex targeting from the trans-Golgi network to the cilium. The chain is ADP-ribosylation factor-like protein 3 from Mus musculus (Mouse).